A 349-amino-acid polypeptide reads, in one-letter code: MKKSSLALMMMGLIASSATQAAEVYNKNGNKLDVYGKVKAMHYMSDYDSKDGDQTYVRFGIKGETQINDDLTGYGRWESEFSGNKTESDSSQKTRLAFAGVKVKNYGSFDYGRNLGALYDVEAWTDMFPEFGGDSSAQTDNFMTKRASGLATYRNTDFFGVVDGLDLTLQYQGKNEGREAKKQNGDGFGTSLSYDFGGSDFAVSAAYTSSDRTNDQNLLARGAKKAEAWATGLKYDANNIYLATMYSETRKMTPISGGFANKAQNFEAVAQYQFDFGLRPSLGYVLSKGKDIEGVGSEDLVNYIDVGVTYYFNKNMNAFVDYKINQLKSDNKLGINDDDIVAVGMTYQF.

The N-terminal stretch at 1 to 21 (MKKSSLALMMMGLIASSATQA) is a signal peptide.

It belongs to the Gram-negative porin family. Homotrimer.

The protein localises to the cell outer membrane. Functionally, uptake of inorganic phosphate, phosphorylated compounds, and some other negatively charged solutes. The polypeptide is Outer membrane porin PhoE (phoE) (Klebsiella oxytoca).